Reading from the N-terminus, the 348-residue chain is Phosphate acyltransferase (348 aa).

The protein belongs to the PlsX family. As to quaternary structure, homodimer. Probably interacts with PlsY.

The protein resides in the cytoplasm. It carries out the reaction a fatty acyl-[ACP] + phosphate = an acyl phosphate + holo-[ACP]. It functions in the pathway lipid metabolism; phospholipid metabolism. Functionally, catalyzes the reversible formation of acyl-phosphate (acyl-PO(4)) from acyl-[acyl-carrier-protein] (acyl-ACP). This enzyme utilizes acyl-ACP as fatty acyl donor, but not acyl-CoA. This chain is Phosphate acyltransferase, found in Francisella tularensis subsp. novicida (strain U112).